A 210-amino-acid chain; its full sequence is Transposable element activator uncharacterized 23 kDa protein (210 aa).

Over residues S67 to R78 the composition is skewed to basic and acidic residues. Residues S67–G87 are disordered.

This is Transposable element activator uncharacterized 23 kDa protein from Zea mays (Maize).